Reading from the N-terminus, the 328-residue chain is UPF0194 membrane protein YE2891 (328 aa).

Positions 1–22 (MNRKKIIVAVVIVALLAAIGYG) are cleaved as a signal peptide. 2 coiled-coil regions span residues 80-109 (YVNA…REEE) and 139-208 (ANKA…TTLL).

Belongs to the UPF0194 family.

It is found in the periplasm. The chain is UPF0194 membrane protein YE2891 from Yersinia enterocolitica serotype O:8 / biotype 1B (strain NCTC 13174 / 8081).